Reading from the N-terminus, the 344-residue chain is Unsaturated rhamnogalacturonyl hydrolase YesR (344 aa).

Substrate contacts are provided by residues 30-31 (DW), asparagine 74, and 118-128 (QHTVNAAEYVF). Aspartate 135 serves as the catalytic Proton donor. Residues 198–202 (RANGW) and 308–309 (NA) each bind substrate.

It belongs to the glycosyl hydrolase 105 family. Monomer.

The protein localises to the cytoplasm. The catalysed reaction is 2-O-(4-deoxy-beta-L-threo-hex-4-enopyranuronosyl)-alpha-L-rhamnose + H2O = 5-dehydro-4-deoxy-D-glucuronate + L-rhamnopyranose. Its function is as follows. Catalyzes the hydrolysis of unsaturated rhamnogalacturonan disaccharide to yield unsaturated D-galacturonic acid and L-rhamnose. It cannot act on unsaturated glucuronyl hydrolase (UGL) substrates containing unsaturated D-glucuronic acid at the non-reducing terminus, although the active pockets of YesR and UGL are very similar. This chain is Unsaturated rhamnogalacturonyl hydrolase YesR (yesR), found in Bacillus subtilis (strain 168).